The sequence spans 144 residues: Noggin (144 aa).

A signal peptide spans 1-4; the sequence is GGGG. 4 cysteine pairs are disulfide-bonded: C67-C104, C90-C140, C96-C142, and C119-C127.

The protein belongs to the noggin family. Homodimer. Interacts with GDF5; inhibits chondrocyte differentiation. In terms of tissue distribution, prominently expressed in the CNS. High levels found in mitral and tufted cells in the olfactory bulb, piriform cortex of the brain and Purkinje cells in the cerebellum. Low level expression seen in the lung, skeletal muscle and skin.

The protein localises to the secreted. Its function is as follows. Essential for cartilage morphogenesis and joint formation. Inhibitor of bone morphogenetic proteins (BMP) signaling which is required for growth and patterning of the neural tube and somite. Inhibits chondrocyte differentiation through its interaction with GDF5 and, probably, GDF6. The polypeptide is Noggin (Nog) (Rattus norvegicus (Rat)).